The sequence spans 446 residues: Probable glycine dehydrogenase (decarboxylating) subunit 1 (446 aa).

This sequence belongs to the GcvP family. N-terminal subunit subfamily. In terms of assembly, the glycine cleavage system is composed of four proteins: P, T, L and H. In this organism, the P 'protein' is a heterodimer of two subunits.

The enzyme catalyses N(6)-[(R)-lipoyl]-L-lysyl-[glycine-cleavage complex H protein] + glycine + H(+) = N(6)-[(R)-S(8)-aminomethyldihydrolipoyl]-L-lysyl-[glycine-cleavage complex H protein] + CO2. In terms of biological role, the glycine cleavage system catalyzes the degradation of glycine. The P protein binds the alpha-amino group of glycine through its pyridoxal phosphate cofactor; CO(2) is released and the remaining methylamine moiety is then transferred to the lipoamide cofactor of the H protein. In Thermococcus onnurineus (strain NA1), this protein is Probable glycine dehydrogenase (decarboxylating) subunit 1.